Here is a 676-residue protein sequence, read N- to C-terminus: Transketolase 7 (676 aa).

H36 is a substrate binding site. Residues H76 and 125-127 (GPL) contribute to the thiamine diphosphate site. A Mg(2+)-binding site is contributed by D166. Residues G167 and N196 each contribute to the thiamine diphosphate site. Mg(2+)-binding residues include N196 and I198. Substrate-binding residues include H273, R367, and S394. A thiamine diphosphate-binding site is contributed by H273. Residues E421 and F448 each coordinate thiamine diphosphate. E421 serves as the catalytic Proton donor. Substrate-binding residues include H472, D480, and R531.

It belongs to the transketolase family. In terms of assembly, homodimer. It depends on Mg(2+) as a cofactor. The cofactor is Ca(2+). Mn(2+) is required as a cofactor. Requires Co(2+) as cofactor. Thiamine diphosphate serves as cofactor. Leaves and roots.

It catalyses the reaction D-sedoheptulose 7-phosphate + D-glyceraldehyde 3-phosphate = aldehydo-D-ribose 5-phosphate + D-xylulose 5-phosphate. Its function is as follows. Could be involved in the conversion of sugars, which are a major phenomenon in the rehydration process. Functionally, catalyzes the transfer of a two-carbon ketol group from a ketose donor to an aldose acceptor, via a covalent intermediate with the cofactor thiamine pyrophosphate. This chain is Transketolase 7 (TKT7), found in Craterostigma plantagineum (Blue gem).